Reading from the N-terminus, the 594-residue chain is Elongation factor 4 (594 aa).

The 183-residue stretch at lysine 2 to glutamate 184 folds into the tr-type G domain. Residues aspartate 14–threonine 19 and asparagine 131–aspartate 134 contribute to the GTP site.

This sequence belongs to the TRAFAC class translation factor GTPase superfamily. Classic translation factor GTPase family. LepA subfamily.

It is found in the cell inner membrane. It catalyses the reaction GTP + H2O = GDP + phosphate + H(+). Required for accurate and efficient protein synthesis under certain stress conditions. May act as a fidelity factor of the translation reaction, by catalyzing a one-codon backward translocation of tRNAs on improperly translocated ribosomes. Back-translocation proceeds from a post-translocation (POST) complex to a pre-translocation (PRE) complex, thus giving elongation factor G a second chance to translocate the tRNAs correctly. Binds to ribosomes in a GTP-dependent manner. The polypeptide is Elongation factor 4 (Francisella philomiragia subsp. philomiragia (strain ATCC 25017 / CCUG 19701 / FSC 153 / O#319-036)).